We begin with the raw amino-acid sequence, 250 residues long: AA9 family lytic polysaccharide monooxygenase B (250 aa).

The N-terminal stretch at 1–21 (MTLSKITSIAGLLASASLVAG) is a signal peptide. The Cu(2+) site is built by H22 and H107. H22 is modified (methylhistidine). Intrachain disulfides connect C77–C199 and C118–C122. N159 carries N-linked (GlcNAc...) asparagine glycosylation. The O2 site is built by H185 and Q194. Cu(2+) is bound at residue Y196.

The protein belongs to the polysaccharide monooxygenase AA9 family. It depends on Cu(2+) as a cofactor. The catalytically essential N-terminal histidine His-22 is post-translationally modified by methylation to prevent protonation of the histidine side chain, and protect the critical active site of the enzyme from oxidative damage.

The protein resides in the secreted. The catalysed reaction is [(1-&gt;4)-beta-D-glucosyl]n+m + reduced acceptor + O2 = 4-dehydro-beta-D-glucosyl-[(1-&gt;4)-beta-D-glucosyl]n-1 + [(1-&gt;4)-beta-D-glucosyl]m + acceptor + H2O.. Its function is as follows. Lytic polysaccharide monooxygenase (LPMO) that depolymerizes crystalline and amorphous polysaccharides via the oxidation of scissile alpha- or beta-(1-4)-glycosidic bonds, yielding C1 and C4 oxidation products. Catalysis by LPMOs requires the reduction of the active-site copper from Cu(II) to Cu(I) by a reducing agent and H(2)O(2) or O(2) as a cosubstrate. Shows activity on phosphoric acid swollen cellulose, on NaOH pretreated soy spent flakes as well as on crystalline cellulose (Avicel). Does not have a positive effect on cel6A activity, but acts synergistically with endoglucanase egl7. The polypeptide is AA9 family lytic polysaccharide monooxygenase B (Aspergillus fumigatus (strain ATCC MYA-4609 / CBS 101355 / FGSC A1100 / Af293) (Neosartorya fumigata)).